Reading from the N-terminus, the 685-residue chain is Augmin complex subunit dgt5 (685 aa).

2 coiled-coil regions span residues Leu-87 to Gln-165 and Asn-342 to Leu-379.

As to quaternary structure, component of the augmin complex composed of dgt2, dgt3, dgt4, dgt5, dgt6, msd1, msd5 and wac. The complex interacts directly or indirectly with microtubules and is required for centrosome-independent generation of spindle microtubules.

It is found in the cytoplasm. The protein resides in the cytoskeleton. It localises to the spindle. The protein localises to the chromosome. Its subcellular location is the centromere. It is found in the kinetochore. The protein resides in the microtubule organizing center. It localises to the centrosome. Its function is as follows. As part of the augmin complex, plays a role in centrosome-independent generation of spindle microtubules. The complex is required for mitotic spindle assembly through its involvement in localizing gamma-tubulin to spindle microtubules. This chain is Augmin complex subunit dgt5, found in Drosophila melanogaster (Fruit fly).